The sequence spans 463 residues: Argininosuccinate lyase (463 aa).

The protein belongs to the lyase 1 family. Argininosuccinate lyase subfamily.

It localises to the cytoplasm. It catalyses the reaction 2-(N(omega)-L-arginino)succinate = fumarate + L-arginine. It participates in amino-acid biosynthesis; L-arginine biosynthesis; L-arginine from L-ornithine and carbamoyl phosphate: step 3/3. This chain is Argininosuccinate lyase, found in Bradyrhizobium sp. (strain ORS 278).